A 141-amino-acid chain; its full sequence is 3-hydroxyacyl-[acyl-carrier-protein] dehydratase FabZ (141 aa).

The active site involves H48.

It belongs to the thioester dehydratase family. FabZ subfamily.

It is found in the cytoplasm. It catalyses the reaction a (3R)-hydroxyacyl-[ACP] = a (2E)-enoyl-[ACP] + H2O. Involved in unsaturated fatty acids biosynthesis. Catalyzes the dehydration of short chain beta-hydroxyacyl-ACPs and long chain saturated and unsaturated beta-hydroxyacyl-ACPs. In Bacillus subtilis (strain 168), this protein is 3-hydroxyacyl-[acyl-carrier-protein] dehydratase FabZ.